Consider the following 143-residue polypeptide: Large ribosomal subunit protein uL13 (143 aa).

The protein belongs to the universal ribosomal protein uL13 family. Part of the 50S ribosomal subunit.

Functionally, this protein is one of the early assembly proteins of the 50S ribosomal subunit, although it is not seen to bind rRNA by itself. It is important during the early stages of 50S assembly. The polypeptide is Large ribosomal subunit protein uL13 (Prochlorococcus marinus (strain MIT 9301)).